Reading from the N-terminus, the 588-residue chain is Calcium/calmodulin-dependent protein kinase kinase 2 (588 aa).

Residues 1–14 (MSSCVSSQPSSNRA) are compositionally biased toward polar residues. Disordered regions lie at residues 1 to 33 (MSSCVSSQPSSNRAAPQDELGGRGSSSSESQKP) and 78 to 100 (GQEVPLDTSGSQARPHLSGRKLS). Ser-2 carries the post-translational modification N-acetylserine. Phosphoserine occurs at positions 100, 114, 129, 133, and 137. Positions 128–139 (YSPVSSPQSSPR) are enriched in low complexity. The tract at residues 128 to 149 (YSPVSSPQSSPRLPRRPTVESH) is disordered. Positions 165–446 (YTLKDEIGKG…VPEIKLHPWV (282 aa)) constitute a Protein kinase domain. ATP is bound by residues 171-179 (IGKGSYGVV) and Lys-194. Positions 204–226 (QAGFPRRPPPRGTRPAPGGCIQP) are RP domain. The tract at residues 205 to 225 (AGFPRRPPPRGTRPAPGGCIQ) is disordered. Residue Asp-312 is the Proton acceptor of the active site. Positions 472–477 (ENSVKH) are autoinhibitory domain. Positions 475-500 (VKHIPSLATVILVKTMIRKRSFGNPF) are calmodulin-binding. Phosphoserine occurs at positions 479, 495, 511, 522, and 572. Residues 497 to 588 (GNPFEGSRRE…LRPEEAMEPE (92 aa)) form a disordered region. A compositionally biased stretch (basic and acidic residues) spans 521–536 (PTRECESLSELKEARQ). Over residues 579 to 588 (LRPEEAMEPE) the composition is skewed to basic and acidic residues.

This sequence belongs to the protein kinase superfamily. Ser/Thr protein kinase family. As to quaternary structure, interacts with calmodulin. In terms of processing, autophosphorylated and phosphorylated by PKA. Each isoform may show a different pattern of phosphorylation. As to expression, ubiquitously expressed with higher levels in the brain. Intermediate levels are detected in spleen, prostate, thyroid and leukocytes. The lowest level is in lung.

The protein localises to the nucleus. It localises to the cytoplasm. It is found in the cell projection. The protein resides in the neuron projection. The catalysed reaction is L-seryl-[protein] + ATP = O-phospho-L-seryl-[protein] + ADP + H(+). It catalyses the reaction L-threonyl-[protein] + ATP = O-phospho-L-threonyl-[protein] + ADP + H(+). Its activity is regulated as follows. Activated by Ca(2+)/calmodulin. Binding of calmodulin may relieve intrasteric autoinhibition. Autophosphorylation does not alter activity or regulation by Ca(2+)/calmodulin. In part, activity is independent on Ca(2+)/calmodulin. In terms of biological role, calcium/calmodulin-dependent protein kinase belonging to a proposed calcium-triggered signaling cascade involved in a number of cellular processes. Isoform 1, isoform 2 and isoform 3 phosphorylate CAMK1 and CAMK4. Isoform 3 phosphorylates CAMK1D. Isoform 4, isoform 5 and isoform 6 lacking part of the calmodulin-binding domain are inactive. Efficiently phosphorylates 5'-AMP-activated protein kinase (AMPK) trimer, including that consisting of PRKAA1, PRKAB1 and PRKAG1. This phosphorylation is stimulated in response to Ca(2+) signals. Seems to be involved in hippocampal activation of CREB1. May play a role in neurite growth. Isoform 3 may promote neurite elongation, while isoform 1 may promoter neurite branching. The sequence is that of Calcium/calmodulin-dependent protein kinase kinase 2 (CAMKK2) from Homo sapiens (Human).